The primary structure comprises 426 residues: Dihydroorotase (426 aa).

H62 and H64 together coordinate Zn(2+). Residues 64 to 66 and N96 contribute to the substrate site; that span reads HLR. Positions 154, 181, 234, and 307 each coordinate Zn(2+). D307 is a catalytic residue. H311 contacts substrate.

The protein belongs to the metallo-dependent hydrolases superfamily. DHOase family. Class I DHOase subfamily. Zn(2+) is required as a cofactor.

The catalysed reaction is (S)-dihydroorotate + H2O = N-carbamoyl-L-aspartate + H(+). It participates in pyrimidine metabolism; UMP biosynthesis via de novo pathway; (S)-dihydroorotate from bicarbonate: step 3/3. In terms of biological role, catalyzes the reversible cyclization of carbamoyl aspartate to dihydroorotate. The protein is Dihydroorotase of Syntrophus aciditrophicus (strain SB).